The chain runs to 247 residues: NH(3)-dependent NAD(+) synthetase (247 aa).

29-36 (GISGGIDS) provides a ligand contact to ATP. Asp35 provides a ligand contact to Mg(2+). Arg120 provides a ligand contact to deamido-NAD(+). ATP is bound at residue Thr140. Residue Glu145 coordinates Mg(2+). Positions 153 and 160 each coordinate deamido-NAD(+). ATP is bound by residues Lys169 and Ser191. 237–238 (HK) is a binding site for deamido-NAD(+).

The protein belongs to the NAD synthetase family. In terms of assembly, homodimer.

It carries out the reaction deamido-NAD(+) + NH4(+) + ATP = AMP + diphosphate + NAD(+) + H(+). It participates in cofactor biosynthesis; NAD(+) biosynthesis; NAD(+) from deamido-NAD(+) (ammonia route): step 1/1. Catalyzes the ATP-dependent amidation of deamido-NAD to form NAD. Uses ammonia as a nitrogen source. The protein is NH(3)-dependent NAD(+) synthetase of Alkaliphilus metalliredigens (strain QYMF).